The primary structure comprises 107 residues: High mobility group protein HMG-I/HMG-Y (107 aa).

A disordered region spans residues Met1–Gln107. N-acetylserine is present on Ser2. Lys7 carries the N6-acetyllysine modification. The residue at position 8 (Ser8) is an ADP-ribosylserine. Ser9 is subject to ADP-ribosylserine; alternate. Ser9 carries the phosphoserine; alternate modification. Residue Lys15 is modified to N6-acetyllysine; alternate. Lys15 is covalently cross-linked (Glycyl lysine isopeptide (Lys-Gly) (interchain with G-Cter in SUMO2); alternate). Residues Lys15–Arg24 show a composition bias toward basic and acidic residues. Residues Thr21–Lys31 constitute a DNA-binding region (a.T hook 1). Residue Arg26 is modified to Asymmetric dimethylarginine; alternate. Residue Arg26 is modified to Omega-N-methylarginine; alternate. Symmetric dimethylarginine; alternate is present on Arg26. A Phosphoserine; by HIPK2 and CDC2 modification is found at Ser36. At Thr39 the chain carries Phosphothreonine. Phosphoserine is present on residues Ser44 and Ser49. Thr53 carries the phosphothreonine; by HIPK2 and CDC2 modification. 2 consecutive DNA-binding regions (a.T hook) follow at residues Thr53 to Gly63 and Ala78 to Lys89. Residues Thr53–Thr77 are interaction with HIPK2. The segment covering Lys55 to Lys74 has biased composition (basic residues). Asymmetric dimethylarginine; by PRMT6; alternate occurs at positions 58 and 60. Omega-N-methylarginine; by PRMT6; alternate is present on residues Arg58 and Arg60. Positions Glu93–Gln107 are enriched in acidic residues. Phosphoserine is present on residues Ser99, Ser102, and Ser103.

The protein belongs to the HMGA family. In terms of assembly, interacts with HIPK2. Isoforms HMG-I and HMG-Y can be phosphorylated by HIPK2. Phosphorylation may modulate DNA-binding affinity. In terms of processing, methylation at Arg-58 is mutually exclusive with methylation at Arg-60.

It is found in the nucleus. Its subcellular location is the chromosome. Its function is as follows. HMG-I/Y bind preferentially to the minor groove of A+T rich regions in double-stranded DNA. It is suggested that these proteins could function in nucleosome phasing and in the 3'-end processing of mRNA transcripts. They are also involved in the transcription regulation of genes containing, or in close proximity to A+T-rich regions. This Cricetulus griseus (Chinese hamster) protein is High mobility group protein HMG-I/HMG-Y (HMGA1).